A 183-amino-acid chain; its full sequence is NADH-quinone oxidoreductase subunit A (183 aa).

3 helical membrane passes run 11-31 (IIAFVIGVTFLCVFMLTVPLL), 63-83 (FYLVAIFFVVFDLEALYLYAW), and 98-118 (VVIFVVDLLIALVYAFSVGAL). The interval 159–183 (TGQIPAQSSGRVKSKTTPALSSEKE) is disordered.

This sequence belongs to the complex I subunit 3 family. As to quaternary structure, NDH-1 is composed of 14 different subunits. Subunits NuoA, H, J, K, L, M, N constitute the membrane sector of the complex.

The protein resides in the cell inner membrane. The catalysed reaction is a quinone + NADH + 5 H(+)(in) = a quinol + NAD(+) + 4 H(+)(out). Functionally, NDH-1 shuttles electrons from NADH, via FMN and iron-sulfur (Fe-S) centers, to quinones in the respiratory chain. The immediate electron acceptor for the enzyme in this species is believed to be ubiquinone. Couples the redox reaction to proton translocation (for every two electrons transferred, four hydrogen ions are translocated across the cytoplasmic membrane), and thus conserves the redox energy in a proton gradient. This Acinetobacter baumannii (strain ACICU) protein is NADH-quinone oxidoreductase subunit A.